The following is a 414-amino-acid chain: TBC domain-containing protein C1778.09 (414 aa).

The region spanning 158-343 (GIPDCWRSIA…RIWDLLFLLG (186 aa)) is the Rab-GAP TBC domain.

The protein resides in the cytoplasm. The protein localises to the nucleus. This is TBC domain-containing protein C1778.09 from Schizosaccharomyces pombe (strain 972 / ATCC 24843) (Fission yeast).